The chain runs to 861 residues: Seed linoleate 9S-lipoxygenase-3 (861 aa).

Residues 41–166 (QGFDILGSTV…HHKIDRIFFA (126 aa)) enclose the PLAT domain. Residues 169–861 (TYLPSETPAP…FRGIPNSISI (693 aa)) form the Lipoxygenase domain. The tract at residues 215 to 257 (NPDSGENHARPVLGGSETYPYPRRGRTGRKPTRKDPNSESRSD) is disordered. The span at 237-246 (RRGRTGRKPT) shows a compositional bias: basic residues. The span at 247–257 (RKDPNSESRSD) shows a compositional bias: basic and acidic residues. Residues His-522, His-527, His-713, Asn-717, and Ile-861 each coordinate Fe cation.

It belongs to the lipoxygenase family. Requires Fe cation as cofactor.

Its subcellular location is the cytoplasm. It carries out the reaction (9Z,12Z)-octadecadienoate + O2 = (9S)-hydroperoxy-(10E,12Z)-octadecadienoate. The protein operates within lipid metabolism; oxylipin biosynthesis. In terms of biological role, plant lipoxygenase may be involved in a number of diverse aspects of plant physiology including growth and development, pest resistance, and senescence or responses to wounding. It catalyzes the hydroperoxidation of lipids containing a cis,cis-1,4-pentadiene structure. This chain is Seed linoleate 9S-lipoxygenase-3 (LOX1.3), found in Pisum sativum (Garden pea).